The sequence spans 232 residues: Sensory rhodopsin III (232 aa).

Transmembrane regions (helical) follow at residues isoleucine 5–phenylalanine 25, leucine 39–glycine 59, phenylalanine 73–valine 93, leucine 100–glycine 120, isoleucine 125–phenylalanine 145, valine 168–isoleucine 188, and asparagine 194–valine 214. The residue at position 205 (lysine 205) is an N6-(retinylidene)lysine.

Belongs to the archaeal/bacterial/fungal opsin family. As to quaternary structure, interacts with HtrM. Post-translationally, the covalent binding of retinal to the apoprotein, bacterioopsin, generates bacteriorhodopsin.

Its subcellular location is the membrane. In terms of biological role, sensory rhodopsin. Associates with an unusual transducer lacking a methyl-accepting transducer domain found in all other photosensory transducers. The chromophore is all-trans-retinal in the dark. The sequence is that of Sensory rhodopsin III (xop2) from Haloarcula marismortui (strain ATCC 43049 / DSM 3752 / JCM 8966 / VKM B-1809) (Halobacterium marismortui).